A 247-amino-acid polypeptide reads, in one-letter code: Ribosomal RNA small subunit methyltransferase G (247 aa).

Residues glycine 84, phenylalanine 89, 136 to 137 (AE), and arginine 155 each bind S-adenosyl-L-methionine.

It belongs to the methyltransferase superfamily. RNA methyltransferase RsmG family.

The protein resides in the cytoplasm. Functionally, specifically methylates the N7 position of a guanine in 16S rRNA. This is Ribosomal RNA small subunit methyltransferase G from Prochlorococcus marinus (strain MIT 9303).